Reading from the N-terminus, the 256-residue chain is Undecaprenyl-diphosphatase (256 aa).

Helical transmembrane passes span 1–21 (MTIL…FLPI), 39–59 (NAIN…AVIF), 70–90 (IDLW…GFIF), 97–117 (LFSL…FLIV), 134–154 (AISL…LIPG), 176–196 (AEFS…YDLL), 205–225 (ANLI…YLSI), and 235–255 (FTFF…LLFF).

It belongs to the UppP family.

It is found in the cell inner membrane. It catalyses the reaction di-trans,octa-cis-undecaprenyl diphosphate + H2O = di-trans,octa-cis-undecaprenyl phosphate + phosphate + H(+). Its function is as follows. Catalyzes the dephosphorylation of undecaprenyl diphosphate (UPP). Confers resistance to bacitracin. This Sulfurimonas denitrificans (strain ATCC 33889 / DSM 1251) (Thiomicrospira denitrificans (strain ATCC 33889 / DSM 1251)) protein is Undecaprenyl-diphosphatase.